A 277-amino-acid polypeptide reads, in one-letter code: Probable enoyl-CoA hydratase, mitochondrial (277 aa).

The N-terminal 42 residues, 1–42, are a transit peptide targeting the mitochondrion; it reads MLKQVIKTVSSSQAPKKYFFKQFCTSTTEKKGRVGLVTLNRP. Residues 85 to 88 and Gly-128 each bind substrate; that span reads ADIK.

This sequence belongs to the enoyl-CoA hydratase/isomerase family. In terms of assembly, homohexamer; dimer of trimers.

The protein resides in the mitochondrion matrix. It catalyses the reaction a (3S)-3-hydroxyacyl-CoA = a (2E)-enoyl-CoA + H2O. The enzyme catalyses a 4-saturated-(3S)-3-hydroxyacyl-CoA = a (3E)-enoyl-CoA + H2O. It carries out the reaction (3S)-3-hydroxybutanoyl-CoA = (2E)-butenoyl-CoA + H2O. The catalysed reaction is 3-hydroxyisovaleryl-CoA = 3-methylbut-2-enoyl-CoA + H2O. It catalyses the reaction 3-hydroxypropanoyl-CoA = acryloyl-CoA + H2O. The enzyme catalyses 3-hydroxybutanoyl-CoA = (2E)-butenoyl-CoA + H2O. The protein operates within lipid metabolism; fatty acid beta-oxidation. In terms of biological role, straight-chain enoyl-CoA thioesters from C4 up to at least C16 are processed, although with decreasing catalytic rate. This chain is Probable enoyl-CoA hydratase, mitochondrial (echs1), found in Dictyostelium discoideum (Social amoeba).